A 238-amino-acid chain; its full sequence is LRRN4 C-terminal-like protein (238 aa).

The first 22 residues, 1-22, serve as a signal peptide directing secretion; the sequence is MLGSPCLLWLLAVTFLVPRAQP. The Extracellular portion of the chain corresponds to 23–194; the sequence is LAPQDFEEEE…RLAVPPNPRT (172 aa). A Fibronectin type-III domain is found at 82-176; sequence PPDPPRMGEV…AGGEGLEGAD (95 aa). N-linked (GlcNAc...) asparagine glycosylation occurs at asparagine 132. Residues 195-215 form a helical membrane-spanning segment; it reads LVHAAVGVGTALALLSCAALV. Residues 216–238 are Cytoplasmic-facing; it reads WHFCLRDRWGCPRRAAARAAGAL.

It localises to the membrane. This is LRRN4 C-terminal-like protein (LRRN4CL) from Homo sapiens (Human).